We begin with the raw amino-acid sequence, 468 residues long: Probable Xaa-Pro aminopeptidase pepP (468 aa).

Mn(2+)-binding residues include D265, D276, E399, and E439.

Belongs to the peptidase M24B family. Mn(2+) is required as a cofactor.

The catalysed reaction is Release of any N-terminal amino acid, including proline, that is linked to proline, even from a dipeptide or tripeptide.. Catalyzes the removal of a penultimate prolyl residue from the N-termini of peptides. This Aspergillus fumigatus (strain CBS 144.89 / FGSC A1163 / CEA10) (Neosartorya fumigata) protein is Probable Xaa-Pro aminopeptidase pepP (pepP).